The following is a 239-amino-acid chain: Phosducin-like protein 2 (239 aa).

The stretch at 26–87 (TEDELFDLIK…IQQMKVEAEL (62 aa)) forms a coiled coil. The Phosducin domain maps to 36–196 (EAAEMATEAE…TTVNDIEWQL (161 aa)). Positions 42–59 (TEAEKNEKLENASLKDLK) are enriched in basic and acidic residues. Disordered stretches follow at residues 42-64 (TEAE…MEDD) and 212-239 (ITLA…DSDD). Positions 90-239 (FGELKEISEP…DESDNSDSDD (150 aa)) are thioredoxin fold. Residues 214–224 (LARKKSQKSRY) are compositionally biased toward basic residues. Over residues 230–239 (DESDNSDSDD) the composition is skewed to acidic residues.

The protein belongs to the phosducin family.

This is Phosducin-like protein 2 (phlp2) from Dictyostelium discoideum (Social amoeba).